Consider the following 1741-residue polypeptide: Protein wings apart-like (1741 aa).

Disordered regions lie at residues 68 to 100, 119 to 277, 291 to 472, 490 to 612, 675 to 810, 823 to 963, 1038 to 1068, 1112 to 1141, and 1708 to 1741; these read SPSQ…FFKS, CGAG…EVAA, SSTF…KPPK, KAAA…VQED, LAVL…ASVN, KAEA…QRGA, AAGK…STLR, SAAG…RVDR, and TSST…SSHR. The segment covering 165–174 has biased composition (basic residues); it reads RKRKSPKKKA. Residues 175-185 show a composition bias toward low complexity; it reads ATTSASTPSTP. Residue threonine 258 is modified to Phosphothreonine. A compositionally biased stretch (low complexity) spans 309 to 334; it reads APSASASTSSQLPSASGSASNPPSAS. The residue at position 355 (serine 355) is a Phosphoserine. Over residues 367–377 the composition is skewed to polar residues; sequence AHQNQLNQLSV. Over residues 408–426 the composition is skewed to low complexity; that stretch reads AADSVDGSSAAVGGASAGD. Acidic residues predominate over residues 438-456; sequence PNEDEEEEEEEEDEEEEPP. Basic residues predominate over residues 503–512; that stretch reads SRSKKHKHKQ. Low complexity-rich tracts occupy residues 515–529 and 553–568; these read AAGS…ATPA and QHTP…LHPQ. Over residues 586-604 the composition is skewed to polar residues; sequence SQSSVLGSISSKGNSTPQL. Composition is skewed to low complexity over residues 796–810 and 849–859; these read NAAA…ASVN and QQVTQVLQQEP. Residues 860–873 show a composition bias toward acidic residues; that stretch reads VPEEQETPDAEEEQ. Over residues 880-894 the composition is skewed to basic and acidic residues; that stretch reads PHTDHREHSPDHDPD. Serine 888 bears the Phosphoserine mark. Low complexity-rich tracts occupy residues 939–952 and 1047–1065; these read GAAN…AAAA and GDSP…SSAS. A compositionally biased stretch (gly residues) spans 1117–1136; that stretch reads SAGGTGATTGGGGATGGGGP. In terms of domain architecture, WAPL spans 1140 to 1648; that stretch reads DRKTKDYYPV…EKYHTFMNLT (509 aa). Low complexity predominate over residues 1708 to 1730; sequence TSSTTVGSGSAPSSTSATGTTRA.

It belongs to the WAPL family.

Its function is as follows. Has a role in female meiotic chromosome segregation in females; proximal heterochromatin is involved in chromosome pairing during female meiosis. Is a dominant suppressor of both white and Stubble position-effect variegation (PEV), while it is a weak enhancer of brown variegation. The protein is Protein wings apart-like of Drosophila melanogaster (Fruit fly).